Reading from the N-terminus, the 714-residue chain is VIN3-like protein 2 (714 aa).

Residues 164-232 (RCSCCICRKY…CFYCVSCGKA (69 aa)) form a PHD-type zinc finger. Positions 239-246 (WKKQLTIA) match the Nuclear localization signal motif. In terms of domain architecture, Fibronectin type-III spans 366-463 (GSTKIRFEDV…INVLTRSAEE (98 aa)). Residues 478 to 498 (LTNCSTLSSNPSSVEAESNND) are compositionally biased toward polar residues. The interval 478–530 (LTNCSTLSSNPSSVEAESNNDYIVPKKPSSKNEDNNSPSVDESAAKRMKRTTD) is disordered. The interval 602 to 714 (SMKDNCNNGD…PSGFCMKLWH (113 aa)) is VIN3-Interacting Domain (VID).

In terms of assembly, self-interacts. Interacts with VIN3 and VIL1. Component of the plant homeodomain / polycomb repressive complex 2 (PHD-PRC2) large complex during prolonged cold, composed of core PRC2 components (VRN2, EZA1, FIE and MSI1), and three related PHD finger proteins (VIL1, VIL2 and VIN3) that mediates histone H3 trimethylation on 'Lys-27' (H3K27me3).

It localises to the nucleus. In terms of biological role, maybe involved in both the vernalization and photoperiod pathways by regulating gene expression. Binds preferentially to dimethylated histone H3 'Lys-9' (H3K9me2). Promotes flowering in non-inductive photoperiods (e.g. short days) through the maintenance of the epigenetically repressed state of MAF5 via H3K9me2 and plant homeodomain / polycomb repressive complex 2 (PHD-PRC2)-dependent H3K27me3. This chain is VIN3-like protein 2 (VIL2), found in Arabidopsis thaliana (Mouse-ear cress).